Reading from the N-terminus, the 149-residue chain is General odorant-binding protein 57c (149 aa).

Positions 1–16 are cleaved as a signal peptide; that stretch reads MLKLWLICILTVSVVS. Disulfide bonds link Cys-32–Cys-70, Cys-66–Cys-117, and Cys-106–Cys-126.

The protein belongs to the PBP/GOBP family.

Present in the aqueous fluid surrounding olfactory sensory dendrites and are thought to aid in the capture and transport of hydrophobic odorants into and through this fluid. This chain is General odorant-binding protein 57c, found in Drosophila melanogaster (Fruit fly).